The chain runs to 311 residues: 4-diphosphocytidyl-2-C-methyl-D-erythritol kinase (311 aa).

Lys-16 is an active-site residue. 100–110 (PIGAGLAGGSS) contacts ATP. Asp-142 is an active-site residue.

Belongs to the GHMP kinase family. IspE subfamily.

The catalysed reaction is 4-CDP-2-C-methyl-D-erythritol + ATP = 4-CDP-2-C-methyl-D-erythritol 2-phosphate + ADP + H(+). It functions in the pathway isoprenoid biosynthesis; isopentenyl diphosphate biosynthesis via DXP pathway; isopentenyl diphosphate from 1-deoxy-D-xylulose 5-phosphate: step 3/6. In terms of biological role, catalyzes the phosphorylation of the position 2 hydroxy group of 4-diphosphocytidyl-2C-methyl-D-erythritol. This chain is 4-diphosphocytidyl-2-C-methyl-D-erythritol kinase, found in Prochlorococcus marinus (strain AS9601).